The primary structure comprises 303 residues: UDP-3-O-acyl-N-acetylglucosamine deacetylase (303 aa).

Zn(2+)-binding residues include His-79, His-238, and Asp-242. His-265 (proton donor) is an active-site residue.

This sequence belongs to the LpxC family. Zn(2+) is required as a cofactor.

The catalysed reaction is a UDP-3-O-[(3R)-3-hydroxyacyl]-N-acetyl-alpha-D-glucosamine + H2O = a UDP-3-O-[(3R)-3-hydroxyacyl]-alpha-D-glucosamine + acetate. The protein operates within glycolipid biosynthesis; lipid IV(A) biosynthesis; lipid IV(A) from (3R)-3-hydroxytetradecanoyl-[acyl-carrier-protein] and UDP-N-acetyl-alpha-D-glucosamine: step 2/6. Functionally, catalyzes the hydrolysis of UDP-3-O-myristoyl-N-acetylglucosamine to form UDP-3-O-myristoylglucosamine and acetate, the committed step in lipid A biosynthesis. In Pseudoalteromonas translucida (strain TAC 125), this protein is UDP-3-O-acyl-N-acetylglucosamine deacetylase.